Consider the following 319-residue polypeptide: Protein quaking-B (319 aa).

A KH domain is found at 87 to 153; sequence YVPVKEYPDF…WEHLNEDLHV (67 aa). The SH3-binding motif lies at 276-279; that stretch reads PQTP.

Belongs to the quaking family. In terms of assembly, homodimer; does not require RNA to homodimerize.

Its subcellular location is the cytoplasm. It localises to the nucleus. Functionally, RNA reader protein, which recognizes and binds specific RNAs, thereby regulating RNA metabolic processes, such as pre-mRNA splicing, circular RNA (circRNA) formation, mRNA export, mRNA stability and/or translation. Involved in various cellular processes, such as mRNA storage into stress granules, apoptosis, interferon response, glial cell fate and development. Binds to the 5'-NACUAAY-N(1,20)-UAAY-3' RNA core sequence. Acts as a mRNA modification reader that specifically recognizes and binds mRNA transcripts modified by internal N(7)-methylguanine (m7G). Promotes the formation of circular RNAs (circRNAs): acts by binding to sites flanking circRNA-forming exons. CircRNAs are produced by back-splicing circularization of pre-mRNAs. Required to protect and promote stability of mRNAs which promotes oligodendrocyte differentiation. Acts as an important regulator of muscle development: required during early skeletal myofibril formation by regulating the accumulation of the muscle-specific tropomyosin-3 (tpm3) transcripts. In Danio rerio (Zebrafish), this protein is Protein quaking-B (qki2).